The primary structure comprises 485 residues: Rhamnulokinase (485 aa).

10-14 serves as a coordination point for ATP; it reads ASSGR. Residues alanine 78 and 233–235 contribute to the substrate site; that span reads HDT. Aspartate 234 acts as the Proton acceptor in catalysis. Threonine 256 provides a ligand contact to ATP. A substrate-binding site is contributed by asparagine 293. Glutamine 301 is an ATP binding site. Cysteine 351 and cysteine 368 are disulfide-bonded. An ATP-binding site is contributed by glycine 400.

The protein belongs to the rhamnulokinase family. Mg(2+) is required as a cofactor.

It carries out the reaction L-rhamnulose + ATP = L-rhamnulose 1-phosphate + ADP + H(+). It functions in the pathway carbohydrate degradation; L-rhamnose degradation; glycerone phosphate from L-rhamnose: step 2/3. Involved in the catabolism of L-rhamnose (6-deoxy-L-mannose). Catalyzes the transfer of the gamma-phosphate group from ATP to the 1-hydroxyl group of L-rhamnulose to yield L-rhamnulose 1-phosphate. In Bacillus subtilis (strain 168), this protein is Rhamnulokinase.